A 361-amino-acid polypeptide reads, in one-letter code: Beta-hexosaminidase (361 aa).

Substrate is bound by residues D69, R77, R144, and 174-175 (KH). Residue H187 is the Proton donor/acceptor of the active site. The Nucleophile role is filled by D258.

This sequence belongs to the glycosyl hydrolase 3 family. NagZ subfamily.

It localises to the cytoplasm. The enzyme catalyses Hydrolysis of terminal non-reducing N-acetyl-D-hexosamine residues in N-acetyl-beta-D-hexosaminides.. Its pathway is cell wall biogenesis; peptidoglycan recycling. Its function is as follows. Plays a role in peptidoglycan recycling by cleaving the terminal beta-1,4-linked N-acetylglucosamine (GlcNAc) from peptide-linked peptidoglycan fragments, giving rise to free GlcNAc, anhydro-N-acetylmuramic acid and anhydro-N-acetylmuramic acid-linked peptides. The protein is Beta-hexosaminidase of Neisseria gonorrhoeae (strain NCCP11945).